The sequence spans 228 residues: Thiamine-phosphate synthase (228 aa).

4-amino-2-methyl-5-(diphosphooxymethyl)pyrimidine contacts are provided by residues 57–61 and N89; that span reads QLRDK. Mg(2+) contacts are provided by D90 and D109. S128 is a 4-amino-2-methyl-5-(diphosphooxymethyl)pyrimidine binding site. 154–156 is a binding site for 2-[(2R,5Z)-2-carboxy-4-methylthiazol-5(2H)-ylidene]ethyl phosphate; that stretch reads TPS. K157 provides a ligand contact to 4-amino-2-methyl-5-(diphosphooxymethyl)pyrimidine. 2-[(2R,5Z)-2-carboxy-4-methylthiazol-5(2H)-ylidene]ethyl phosphate contacts are provided by residues G185 and 205–206; that span reads IS.

Belongs to the thiamine-phosphate synthase family. Mg(2+) is required as a cofactor.

It catalyses the reaction 2-[(2R,5Z)-2-carboxy-4-methylthiazol-5(2H)-ylidene]ethyl phosphate + 4-amino-2-methyl-5-(diphosphooxymethyl)pyrimidine + 2 H(+) = thiamine phosphate + CO2 + diphosphate. It carries out the reaction 2-(2-carboxy-4-methylthiazol-5-yl)ethyl phosphate + 4-amino-2-methyl-5-(diphosphooxymethyl)pyrimidine + 2 H(+) = thiamine phosphate + CO2 + diphosphate. The catalysed reaction is 4-methyl-5-(2-phosphooxyethyl)-thiazole + 4-amino-2-methyl-5-(diphosphooxymethyl)pyrimidine + H(+) = thiamine phosphate + diphosphate. It participates in cofactor biosynthesis; thiamine diphosphate biosynthesis; thiamine phosphate from 4-amino-2-methyl-5-diphosphomethylpyrimidine and 4-methyl-5-(2-phosphoethyl)-thiazole: step 1/1. Its function is as follows. Condenses 4-methyl-5-(beta-hydroxyethyl)thiazole monophosphate (THZ-P) and 2-methyl-4-amino-5-hydroxymethyl pyrimidine pyrophosphate (HMP-PP) to form thiamine monophosphate (TMP). This chain is Thiamine-phosphate synthase, found in Roseiflexus castenholzii (strain DSM 13941 / HLO8).